The primary structure comprises 183 residues: Photosystem II extrinsic protein V (183 aa).

An N-terminal signal peptide occupies residues 1–31 (MTFGHCRRASTLRSAFVLGLCGLLLAGCSGA). Heme c-binding residues include C84, C87, H88, and C138.

This sequence belongs to the cytochrome c family. PsbV subfamily. PSII is composed of 1 copy each of membrane proteins PsbA, PsbB, PsbC, PsbD, PsbE, PsbF, PsbH, PsbI, PsbJ, PsbK, PsbL, PsbM, PsbT, PsbX, Psb30/Ycf12, peripheral proteins PsbO, CyanoQ (PsbQ), PsbU, PsbV and a large number of cofactors. It forms dimeric complexes. It depends on heme c as a cofactor.

Its subcellular location is the cell inner membrane. Probably one of the extrinsic, lumenal subunits of photosystem II (PSII). PSII is a light-driven water plastoquinone oxidoreductase, using light energy to abstract electrons from H(2)O, generating a proton gradient subsequently used for ATP formation. The extrinsic proteins stabilize the structure of photosystem II oxygen-evolving complex (OEC), the ion environment of oxygen evolution and protect the OEC against heat-induced inactivation. Low-potential cytochrome c that plays a role in the OEC of PSII. In Gloeobacter violaceus (strain ATCC 29082 / PCC 7421), this protein is Photosystem II extrinsic protein V (psbV1).